Consider the following 136-residue polypeptide: ATP synthase epsilon chain (136 aa).

The interval 106 to 136 (MEGQPSSPEKLKAQQQLNEARARLQASKTAD) is disordered.

This sequence belongs to the ATPase epsilon chain family. As to quaternary structure, F-type ATPases have 2 components, CF(1) - the catalytic core - and CF(0) - the membrane proton channel. CF(1) has five subunits: alpha(3), beta(3), gamma(1), delta(1), epsilon(1). CF(0) has three main subunits: a, b and c.

Its subcellular location is the cellular thylakoid membrane. Functionally, produces ATP from ADP in the presence of a proton gradient across the membrane. This is ATP synthase epsilon chain from Synechococcus sp. (strain CC9605).